Here is a 338-residue protein sequence, read N- to C-terminus: Ferrochelatase (338 aa).

Residues His-189 and Glu-293 each contribute to the Fe cation site.

It belongs to the ferrochelatase family.

The protein resides in the cytoplasm. The enzyme catalyses heme b + 2 H(+) = protoporphyrin IX + Fe(2+). The protein operates within porphyrin-containing compound metabolism; protoheme biosynthesis; protoheme from protoporphyrin-IX: step 1/1. Catalyzes the ferrous insertion into protoporphyrin IX. This Azotobacter vinelandii (strain DJ / ATCC BAA-1303) protein is Ferrochelatase.